Consider the following 184-residue polypeptide: UPF0149 protein PSPA7_5968 (184 aa).

It belongs to the UPF0149 family.

This Pseudomonas paraeruginosa (strain DSM 24068 / PA7) (Pseudomonas aeruginosa (strain PA7)) protein is UPF0149 protein PSPA7_5968.